Consider the following 792-residue polypeptide: Zinc finger CCCH domain-containing protein 11A (792 aa).

C3H1-type zinc fingers lie at residues 2 to 29 (PNQGEDCYFYFYSTCAKGDSCPFRHCEA), 31 to 57 (LGNETVCTLWQEGRCFRQVCRFRHMEI), and 60 to 87 (KRSEIPCYWENQPVGCQKLNCAFHHTRS). Disordered stretches follow at residues 103–191 (PTVP…VHNG), 223–331 (KKMK…KAGE), and 345–443 (ASQK…RSMQ). Ser108 bears the Phosphoserine mark. Glycyl lysine isopeptide (Lys-Gly) (interchain with G-Cter in SUMO2) cross-links involve residues Lys114 and Lys124. Over residues 115-135 (TSQLTVQQSKLSVQSNPSPQL) the composition is skewed to polar residues. Residue Ser132 is modified to Phosphoserine. Residue Lys140 forms a Glycyl lysine isopeptide (Lys-Gly) (interchain with G-Cter in SUMO2) linkage. Phosphoserine is present on residues Ser149, Ser171, and Ser289. A compositionally biased stretch (acidic residues) spans 160–175 (ADDDEDDDDQFSEEGD). Basic and acidic residues-rich tracts occupy residues 308–331 (KKVESPETNIDKAPKKERGHKAGE) and 345–360 (ASQKRGELQTKLKAEE). Residues 338–360 (EEILLERASQKRGELQTKLKAEE) adopt a coiled-coil conformation. Phosphoserine is present on Ser346. The span at 367–376 (SPSGTKSSSS) shows a compositional bias: low complexity. Basic and acidic residues-rich tracts occupy residues 393–405 (QQEMERQKSKKDT) and 431–443 (QPEEPAGRARSMQ). Residue Lys454 forms a Glycyl lysine isopeptide (Lys-Gly) (interchain with G-Cter in SUMO2) linkage. 2 disordered regions span residues 458–531 (ALRV…PTKL) and 545–571 (QRLQERGASQKEKAALSSVRGDEASSY). Polar residues predominate over residues 461–473 (VQQSSESSGNSRP). Basic and acidic residues-rich tracts occupy residues 492-501 (GVKEEKKCGL) and 545-558 (QRLQERGASQKEKA). Lys601 is covalently cross-linked (Glycyl lysine isopeptide (Lys-Gly) (interchain with G-Cter in SUMO2)). The tract at residues 690-750 (LSEDKPVTMS…SASTGKPPLS (61 aa)) is disordered. The span at 698–715 (MSETENPKDSSVLSSAQA) shows a compositional bias: polar residues. Over residues 717-730 (SEPLLPEGSGPSSS) the composition is skewed to low complexity.

As to quaternary structure, interacts with TREX complex components THOC2, DDX39 and POLDIP3; the interactions are ATP-dependent. Interacts with PABPN1; this interaction retains ZC3H11A in nuclear speckles. Interacts with KPNA3.

Its subcellular location is the nucleus speckle. Functionally, through its association with TREX complex components, may participate in the export and post-transcriptional coordination of selected mRNA transcripts, including those required to maintain the metabolic processes in embryonic cells. Binds RNA. In Mus musculus (Mouse), this protein is Zinc finger CCCH domain-containing protein 11A (Zc3h11a).